The following is a 432-amino-acid chain: Serine--tRNA ligase (432 aa).

239 to 241 (TSE) contributes to the L-serine binding site. 270–272 (RSE) provides a ligand contact to ATP. E293 serves as a coordination point for L-serine. ATP is bound at residue 357-360 (EISS). Residue S392 coordinates L-serine.

Belongs to the class-II aminoacyl-tRNA synthetase family. Type-1 seryl-tRNA synthetase subfamily. In terms of assembly, homodimer. The tRNA molecule binds across the dimer.

The protein localises to the cytoplasm. The enzyme catalyses tRNA(Ser) + L-serine + ATP = L-seryl-tRNA(Ser) + AMP + diphosphate + H(+). The catalysed reaction is tRNA(Sec) + L-serine + ATP = L-seryl-tRNA(Sec) + AMP + diphosphate + H(+). Its pathway is aminoacyl-tRNA biosynthesis; selenocysteinyl-tRNA(Sec) biosynthesis; L-seryl-tRNA(Sec) from L-serine and tRNA(Sec): step 1/1. Its function is as follows. Catalyzes the attachment of serine to tRNA(Ser). Is also able to aminoacylate tRNA(Sec) with serine, to form the misacylated tRNA L-seryl-tRNA(Sec), which will be further converted into selenocysteinyl-tRNA(Sec). In Methylibium petroleiphilum (strain ATCC BAA-1232 / LMG 22953 / PM1), this protein is Serine--tRNA ligase.